The chain runs to 406 residues: Probable endo-xylogalacturonan hydrolase A (406 aa).

The signal sequence occupies residues 1–18; the sequence is MLYPRNLALFSLLSLSSA. PbH1 repeat units lie at residues 183–213, 214–235, 237–257, and 299–320; these read TQHV…DIGA, STHV…AFKP, SNYV…SVGS, and VKNV…QIES. Residue Asp-228 is the Proton donor of the active site. His-251 is a catalytic residue. N-linked (GlcNAc...) asparagine glycosylation occurs at Asn-301.

The protein belongs to the glycosyl hydrolase 28 family.

It localises to the secreted. Pectinolytic enzyme involved in the degradation of xylogalacturonan (xga), a galacturonan backbone heavily substituted with xylose, and which is one important component of the hairy regions of pectin. Activity requires a galacturonic acid backbone substituted with xylose. The sequence is that of Probable endo-xylogalacturonan hydrolase A (xghA) from Aspergillus fumigatus (strain CBS 144.89 / FGSC A1163 / CEA10) (Neosartorya fumigata).